A 226-amino-acid chain; its full sequence is Leucyl/phenylalanyl-tRNA--protein transferase (226 aa).

This sequence belongs to the L/F-transferase family.

The protein localises to the cytoplasm. It carries out the reaction N-terminal L-lysyl-[protein] + L-leucyl-tRNA(Leu) = N-terminal L-leucyl-L-lysyl-[protein] + tRNA(Leu) + H(+). The enzyme catalyses N-terminal L-arginyl-[protein] + L-leucyl-tRNA(Leu) = N-terminal L-leucyl-L-arginyl-[protein] + tRNA(Leu) + H(+). The catalysed reaction is L-phenylalanyl-tRNA(Phe) + an N-terminal L-alpha-aminoacyl-[protein] = an N-terminal L-phenylalanyl-L-alpha-aminoacyl-[protein] + tRNA(Phe). In terms of biological role, functions in the N-end rule pathway of protein degradation where it conjugates Leu, Phe and, less efficiently, Met from aminoacyl-tRNAs to the N-termini of proteins containing an N-terminal arginine or lysine. This Pseudomonas fluorescens (strain Pf0-1) protein is Leucyl/phenylalanyl-tRNA--protein transferase.